The following is a 248-amino-acid chain: Probable transcriptional regulatory protein Pfl01_4410 (248 aa).

Belongs to the TACO1 family.

It is found in the cytoplasm. This is Probable transcriptional regulatory protein Pfl01_4410 from Pseudomonas fluorescens (strain Pf0-1).